Here is a 164-residue protein sequence, read N- to C-terminus: Peptidyl-prolyl cis-trans isomerase CYP18-2 (164 aa).

The region spanning 12–162 (VTLETSMGPF…HEVKILRTKV (151 aa)) is the PPIase cyclophilin-type domain.

The protein belongs to the cyclophilin-type PPIase family. In terms of tissue distribution, ubiquitous.

It localises to the cytoplasm. The enzyme catalyses [protein]-peptidylproline (omega=180) = [protein]-peptidylproline (omega=0). Functionally, PPIases accelerate the folding of proteins. It catalyzes the cis-trans isomerization of proline imidic peptide bonds in oligopeptides. In Arabidopsis thaliana (Mouse-ear cress), this protein is Peptidyl-prolyl cis-trans isomerase CYP18-2 (CYP18-2).